Reading from the N-terminus, the 372-residue chain is 4-hydroxy-3-methylbut-2-en-1-yl diphosphate synthase (flavodoxin) (372 aa).

The [4Fe-4S] cluster site is built by cysteine 270, cysteine 273, cysteine 305, and glutamate 312.

Belongs to the IspG family. Requires [4Fe-4S] cluster as cofactor.

The enzyme catalyses (2E)-4-hydroxy-3-methylbut-2-enyl diphosphate + oxidized [flavodoxin] + H2O + 2 H(+) = 2-C-methyl-D-erythritol 2,4-cyclic diphosphate + reduced [flavodoxin]. It functions in the pathway isoprenoid biosynthesis; isopentenyl diphosphate biosynthesis via DXP pathway; isopentenyl diphosphate from 1-deoxy-D-xylulose 5-phosphate: step 5/6. In terms of biological role, converts 2C-methyl-D-erythritol 2,4-cyclodiphosphate (ME-2,4cPP) into 1-hydroxy-2-methyl-2-(E)-butenyl 4-diphosphate. The protein is 4-hydroxy-3-methylbut-2-en-1-yl diphosphate synthase (flavodoxin) of Salmonella choleraesuis (strain SC-B67).